The primary structure comprises 397 residues: Enoyl-[acyl-carrier-protein] reductase [NADH] (397 aa).

Residues glycine 48–tyrosine 53, phenylalanine 74–glutamate 75, aspartate 111–alanine 112, and leucine 139–alanine 140 each bind NAD(+). Tyrosine 224 serves as a coordination point for substrate. Tyrosine 234 serves as the catalytic Proton donor. NAD(+) contacts are provided by residues lysine 243 and valine 272–threonine 274.

Belongs to the TER reductase family. Monomer.

It catalyses the reaction a 2,3-saturated acyl-[ACP] + NAD(+) = a (2E)-enoyl-[ACP] + NADH + H(+). It participates in lipid metabolism; fatty acid biosynthesis. Involved in the final reduction of the elongation cycle of fatty acid synthesis (FAS II). Catalyzes the reduction of a carbon-carbon double bond in an enoyl moiety that is covalently linked to an acyl carrier protein (ACP). The sequence is that of Enoyl-[acyl-carrier-protein] reductase [NADH] from Pseudomonas fluorescens (strain SBW25).